We begin with the raw amino-acid sequence, 231 residues long: MAKLTKRQKAIAAAVEANKVYTLEEAVQVLNSLPAAKFKESLDISVNLGVDPRKSDQVVRGATTLPAGTGKTVRVAVFAQGAQAEAAKEAGADVVGFDDLAESIQGGNLDFDVVIAAPDAMRVVGKLGTILGPRGLMPNPKVGTVTPDVAGAVKNAKSGQARYRVDKAGIIHAAIGQVGFDAAAIRQNVETLVADLEKLKPATSKGVYIKKITLSSTMGPGLTVDVNNVSN.

It belongs to the universal ribosomal protein uL1 family. As to quaternary structure, part of the 50S ribosomal subunit.

In terms of biological role, binds directly to 23S rRNA. The L1 stalk is quite mobile in the ribosome, and is involved in E site tRNA release. Functionally, protein L1 is also a translational repressor protein, it controls the translation of the L11 operon by binding to its mRNA. The chain is Large ribosomal subunit protein uL1 from Acinetobacter baumannii (strain AB0057).